Consider the following 297-residue polypeptide: MDCQENEYWDQWGRCVTCQRCGPGQELSKDCGYGEGGDAYCTACPPRRYKSSWGHHRCQSCITCAVINRVQKVNCTATSNAVCGDCLPRFYRKTRIGGLQDQECIPCTKQTPTSEVQCAFQLSLVEADTPTVPPQEATLVALVSSLLVVFTLAFLGLFFLYCKQFFNRHCQRGGLLQFEADKTAKEESLFPVPPSKETSAESQVSENIFQTQPLNPILEDDCSSTSGFPTQESFTMASCTSESHSHWVHSPIECTELDLQKFSSSASYTGAETLGGNTVESTGDRLELNVPFEVPSP.

Residues 1–138 lie on the Extracellular side of the membrane; that stretch reads MDCQENEYWD…TPTVPPQEAT (138 aa). 3 TNFR-Cys repeats span residues 2–41, 43–83, and 85–118; these read DCQENEYWDQWGRCVTCQRCGPGQELSKDCGYGEGGDAYC, ACPP…NAVC, and DCLPRFYRKTRIGGLQDQECIPCTKQTPTSEVQC. Disulfide bonds link Cys3/Cys15, Cys18/Cys31, Cys21/Cys41, Cys44/Cys58, Cys61/Cys75, Cys64/Cys83, Cys86/Cys104, and Cys107/Cys118. Asn74 is a glycosylation site (N-linked (GlcNAc...) asparagine). The helical; Signal-anchor for type III membrane protein transmembrane segment at 139–159 threads the bilayer; the sequence is LVALVSSLLVVFTLAFLGLFF. Residues 160 to 297 lie on the Cytoplasmic side of the membrane; the sequence is LYCKQFFNRH…LNVPFEVPSP (138 aa). Residues 272 to 281 show a composition bias toward polar residues; sequence ETLGGNTVES. The segment at 272 to 297 is disordered; it reads ETLGGNTVESTGDRLELNVPFEVPSP.

As to quaternary structure, associates with TRAF1, TRAF3 and TRAF6.

It is found in the membrane. In terms of biological role, receptor for EDA isoform A2, but not for EDA isoform A1. Mediates the activation of the NF-kappa-B and JNK pathways. Activation seems to be mediated by binding to TRAF3 and TRAF6. The sequence is that of Tumor necrosis factor receptor superfamily member 27 (EDA2R) from Homo sapiens (Human).